The sequence spans 459 residues: Bifunctional protein GlmU (459 aa).

A pyrophosphorylase region spans residues 1–230 (MSNRFAVILA…FDETLGVNDR (230 aa)). UDP-N-acetyl-alpha-D-glucosamine contacts are provided by residues 9 to 12 (LAAG), lysine 23, glutamine 73, and 78 to 79 (GT). Aspartate 103 contacts Mg(2+). Positions 140, 155, 170, and 228 each coordinate UDP-N-acetyl-alpha-D-glucosamine. Asparagine 228 contributes to the Mg(2+) binding site. The interval 231–251 (VALSQAEIIMKNRINRKNMVN) is linker. The N-acetyltransferase stretch occupies residues 252–459 (GVTIIDPSNT…VDQLLNKKKS (208 aa)). 2 residues coordinate UDP-N-acetyl-alpha-D-glucosamine: arginine 333 and lysine 351. Histidine 363 serves as the catalytic Proton acceptor. Residues tyrosine 366 and asparagine 377 each contribute to the UDP-N-acetyl-alpha-D-glucosamine site. Acetyl-CoA-binding positions include 386–387 (NY), alanine 423, and arginine 440.

In the N-terminal section; belongs to the N-acetylglucosamine-1-phosphate uridyltransferase family. It in the C-terminal section; belongs to the transferase hexapeptide repeat family. Homotrimer. Mg(2+) is required as a cofactor.

It is found in the cytoplasm. It catalyses the reaction alpha-D-glucosamine 1-phosphate + acetyl-CoA = N-acetyl-alpha-D-glucosamine 1-phosphate + CoA + H(+). The enzyme catalyses N-acetyl-alpha-D-glucosamine 1-phosphate + UTP + H(+) = UDP-N-acetyl-alpha-D-glucosamine + diphosphate. It functions in the pathway nucleotide-sugar biosynthesis; UDP-N-acetyl-alpha-D-glucosamine biosynthesis; N-acetyl-alpha-D-glucosamine 1-phosphate from alpha-D-glucosamine 6-phosphate (route II): step 2/2. Its pathway is nucleotide-sugar biosynthesis; UDP-N-acetyl-alpha-D-glucosamine biosynthesis; UDP-N-acetyl-alpha-D-glucosamine from N-acetyl-alpha-D-glucosamine 1-phosphate: step 1/1. It participates in bacterial outer membrane biogenesis; LPS lipid A biosynthesis. Functionally, catalyzes the last two sequential reactions in the de novo biosynthetic pathway for UDP-N-acetylglucosamine (UDP-GlcNAc). The C-terminal domain catalyzes the transfer of acetyl group from acetyl coenzyme A to glucosamine-1-phosphate (GlcN-1-P) to produce N-acetylglucosamine-1-phosphate (GlcNAc-1-P), which is converted into UDP-GlcNAc by the transfer of uridine 5-monophosphate (from uridine 5-triphosphate), a reaction catalyzed by the N-terminal domain. The polypeptide is Bifunctional protein GlmU (Bacillus mycoides (strain KBAB4) (Bacillus weihenstephanensis)).